The primary structure comprises 204 residues: ADP-ribosylation factor-like protein 15 (204 aa).

GTP is bound by residues 39-46 (GLTGSGKT), 82-86 (ELGGA), and 142-145 (NHQD).

This sequence belongs to the small GTPase superfamily. Arf family.

The sequence is that of ADP-ribosylation factor-like protein 15 (ARL15) from Pongo abelii (Sumatran orangutan).